Consider the following 533-residue polypeptide: Calcium-dependent protein kinase 8 (533 aa).

Residues 1-21 (MGNCCASPGSETGSKKGKPKI) are disordered. A lipid anchor (N-myristoyl glycine) is attached at G2. The 259-residue stretch at 57–315 (YDLGREVGRG…AAQVLEHSWI (259 aa)) folds into the Protein kinase domain. Residues 63 to 71 (VGRGEFGIT) and K86 contribute to the ATP site. D181 acts as the Proton acceptor in catalysis. S221 carries the phosphoserine modification. The tract at residues 321-351 (APNVSLGETVKARLKQFSVMNKLKKRALRVI) is autoinhibitory domain. EF-hand domains follow at residues 358–394 (EEVA…GQQQ), 395–430 (IPDT…LKKM), 431–466 (ANDE…EVDT), and 467–502 (NSEE…GTDW). The Ca(2+) site is built by D371, T375, K377, E382, D408, D410, D412, T414, E419, D444, N446, S448, Y450, E455, D480, D482, D484, and R486. Residue S488 is modified to Phosphoserine. Position 491 (E491) interacts with Ca(2+). S526 carries the post-translational modification Phosphoserine.

The protein belongs to the protein kinase superfamily. Ser/Thr protein kinase family. CDPK subfamily.

Its subcellular location is the cell membrane. The enzyme catalyses L-seryl-[protein] + ATP = O-phospho-L-seryl-[protein] + ADP + H(+). It carries out the reaction L-threonyl-[protein] + ATP = O-phospho-L-threonyl-[protein] + ADP + H(+). With respect to regulation, activated by calcium. Autophosphorylation may play an important role in the regulation of the kinase activity. Its function is as follows. May play a role in signal transduction pathways that involve calcium as a second messenger. This is Calcium-dependent protein kinase 8 (CPK8) from Arabidopsis thaliana (Mouse-ear cress).